The primary structure comprises 602 residues: Isocyanide synthase A (602 aa).

Belongs to the isocyanide synthase family.

Its function is as follows. Isocyanide synthase involved in the biosynthesis of isocyanides (or isonitriles), a class of microbial secondary metabolites. The presence of an isonitrile moiety within a compound imparts unique biological (cytotoxic, antibacterial, and antiprotozoal) and chemical (transition metal coordination) properties and enables synthetic and biochemical applications. The sequence is that of Isocyanide synthase A from Aspergillus fumigatus (strain ATCC MYA-4609 / CBS 101355 / FGSC A1100 / Af293) (Neosartorya fumigata).